Reading from the N-terminus, the 358-residue chain is MKNLSAYEVYESPKTSGESRTEAVSEAAFESDPEVSAILVLTSSEASTLERVADLVTAHALYAAHDFCAQAQLAAAELPSRVVARLQEFAWGDMNEGHLLIKGLPQVRSLPPTPTSNVHAVAATTPMSRYQALINECVGRMIAYEAEGHGHTFQDMVPSAMSAHSQTSLGSAVELELHTEQAFSPLRPDFVSLACLRGDPRALTYLFSARQLVATLTTQEIAMLREPMWTTTVDESFLAEGRTFLLGFERGPIPILSGADDDPFIVFDQDLMRGISAPAQELQQTVIRAYYAERVSHCLAPGEMLLIDNRRAVHGRSIFAPRFDGADRFLSRSFIVADGSRSRHARSSFGRVVSARFS.

3 residues coordinate Fe cation: His178, Glu180, and His314. Arg328 is a binding site for 2-oxoglutarate.

The protein belongs to the clavaminate synthase family. Fe(2+) serves as cofactor.

The catalysed reaction is L-lysine + 2-oxoglutarate + O2 = (3S)-3-hydroxy-L-lysine + succinate + CO2. In terms of biological role, alpha-ketoglutarate-dependent dioxygenase that in vitro catalyzes the regio- and stereoselective hydroxylation of L-lysine, leading to (3S)-3-hydroxy-L-lysine. Can also use (5R)-5-hydroxy-L-lysine as substrate, but neither D-lysine nor L-ornithine. This is L-lysine 3-hydroxylase from Catenulispora acidiphila (strain DSM 44928 / JCM 14897 / NBRC 102108 / NRRL B-24433 / ID139908).